The primary structure comprises 64 residues: Large ribosomal subunit protein bL33m (64 aa).

It belongs to the bacterial ribosomal protein bL33 family. In terms of assembly, component of the mitochondrial ribosome large subunit (39S) which comprises a 16S rRNA and about 50 distinct proteins.

Its subcellular location is the mitochondrion. This chain is Large ribosomal subunit protein bL33m (mRpL33), found in Drosophila melanogaster (Fruit fly).